A 193-amino-acid polypeptide reads, in one-letter code: MISLMAKIRQEHQSIAEKVAELSLETREFLSVTTAKRQEQAEKQAQELQAFYKDLQETSQQFLSETAQARIAQAEKQAQELLAFHKELQETSQQFLSATAQARIAQAEKQAQELLAFYQEVRETSQQFLSATAQARIAQAEKQAQELLAFHKELQETSQQFLSATADARTAQAKEQKESLLKFRQDLFVSIFG.

Repeats lie at residues 19–51 (VAEL…LQAF), 52–84 (YKDL…LLAF), 85–117 (HKEL…LLAF), 118–150 (YQEV…LLAF), and 151–183 (HKEL…LLKF). A 5 X 33 AA tandem repeats region spans residues 19 to 183 (VAELSLETRE…KEQKESLLKF (165 aa)).

It belongs to the gas vesicle GvpC family.

It localises to the gas vesicle. Functionally, confers stability, involved in shaping gas vesicles (GV), hollow, gas-filled proteinaceous nanostructures. During planktonic growth they allow positioning of the organism at a favorable depth for light or nutrient acquisition. The ratio of GvpA:GvpC is estimated to be 25:1. GvpC strengthens the GV wall, probably by connecting several GvpA proteins in the same and/or adjacent ribs. Removal of GvpC by SDS reduces the critical collapse pressure (CCP) of stored gas vesicles from 0.23 Mpa to 0.08 MPa. Removal of GvpC by urea reduces CCP of freshly isolated GVs from 0.550 MPa to 0.190 MPa; addition of recombinant GvpC restores CCP to 0.508 MPa. As the turgor pressure in this species is usually 0.35 MPa (plus the water column pressure in its growth environment), this protein is essential for GV formation. This chain is Gas vesicle protein C, found in Dolichospermum flosaquae (Anabaena flos-aquae).